The primary structure comprises 190 residues: Holliday junction branch migration complex subunit RuvA (190 aa).

Residues 1–64 (MIGRITGTLI…EDAQLLYGFG (64 aa)) are domain I. The domain II stretch occupies residues 65–137 (SSAERSTFRE…MRGKLGADIG (73 aa)). Residues 137-141 (GATPH) form a flexible linker region. The tract at residues 142–190 (AAGGHQSDILNALLALGYSDKESQAALKKLPEGVDVSEGIRLALKALVR) is domain III.

It belongs to the RuvA family. As to quaternary structure, homotetramer. Forms an RuvA(8)-RuvB(12)-Holliday junction (HJ) complex. HJ DNA is sandwiched between 2 RuvA tetramers; dsDNA enters through RuvA and exits via RuvB. An RuvB hexamer assembles on each DNA strand where it exits the tetramer. Each RuvB hexamer is contacted by two RuvA subunits (via domain III) on 2 adjacent RuvB subunits; this complex drives branch migration. In the full resolvosome a probable DNA-RuvA(4)-RuvB(12)-RuvC(2) complex forms which resolves the HJ.

The protein localises to the cytoplasm. Its function is as follows. The RuvA-RuvB-RuvC complex processes Holliday junction (HJ) DNA during genetic recombination and DNA repair, while the RuvA-RuvB complex plays an important role in the rescue of blocked DNA replication forks via replication fork reversal (RFR). RuvA specifically binds to HJ cruciform DNA, conferring on it an open structure. The RuvB hexamer acts as an ATP-dependent pump, pulling dsDNA into and through the RuvAB complex. HJ branch migration allows RuvC to scan DNA until it finds its consensus sequence, where it cleaves and resolves the cruciform DNA. The polypeptide is Holliday junction branch migration complex subunit RuvA (Bordetella parapertussis (strain 12822 / ATCC BAA-587 / NCTC 13253)).